The sequence spans 177 residues: Protein ParB (177 aa).

The signal sequence occupies residues 1 to 26 (MKRRSYAMLRAAAALAVLVVASPAWA). Residues 27–157 (ELRGEVVRII…RGKRVGLWSD (131 aa)) form the TNase-like domain. Active-site residues include R53, E61, and R95.

In terms of assembly, monomer. Ca(2+) is required as a cofactor. The N-terminus is blocked.

Its subcellular location is the secreted. With respect to regulation, endonuclease activity is inhibited by EDTA. Involved in plasmid partition. An endonuclease that acts on supercoiled dsDNA, converting it first to open circular DNA and then linearizing it. Preferentially cleaves regions in dsDNA that are capable of forming ssDNA, such as AT-rich regions and sequences that can form cruciforms. Has poor endonucleolytic activity on linear DNA, has 5'-3' exonuclease activity on dsDNA cleaving generating 3'-phosphonucleotides. This chain is Protein ParB, found in Escherichia coli.